The primary structure comprises 299 residues: Coenzyme PQQ synthesis protein B (299 aa).

Belongs to the PqqB family.

It functions in the pathway cofactor biosynthesis; pyrroloquinoline quinone biosynthesis. In terms of biological role, may be involved in the transport of PQQ or its precursor to the periplasm. The polypeptide is Coenzyme PQQ synthesis protein B (Xanthomonas campestris pv. campestris (strain 8004)).